Reading from the N-terminus, the 141-residue chain is VLSASDKTNVKGVFAKVGGSAEAYGAETLERMFTAYPQTKTYFPHFDLHHGSAQIKAHGKKVAAALVEAANHIDDIAGALSKLSDLHAQKLRVDPVNFKLLGHCFLVVVAIHHPTLLTPEVHASLDKFMCAVAKELTAKYR.

The Globin domain occupies V1–R141. An O2-binding site is contributed by H58. Position 87 (H87) interacts with heme b.

This sequence belongs to the globin family. As to quaternary structure, heterotetramer of two alpha chains and two beta chains. Red blood cells.

Functionally, involved in oxygen transport from the lung to the various peripheral tissues. The chain is Hemoglobin subunit alpha-A (HBAA) from Phalacrocorax carbo (Great cormorant).